Consider the following 2598-residue polypeptide: Partially reducing polyketide synthase men1 (2598 aa).

The 429-residue stretch at 7–435 (SQSIAIVGLS…GSNAHAILDD (429 aa)) folds into the Ketosynthase family 3 (KS3) domain. Active-site for beta-ketoacyl synthase activity residues include Cys-181, His-316, and His-358. The span at 450–459 (GKSHHHHHQH) shows a compositional bias: basic residues. 2 disordered regions span residues 450–490 (GKSH…NGTT) and 537–557 (AEKQ…DPEK). Low complexity predominate over residues 474-490 (VNGTSEVNGTSGVNGTT). One can recognise a Malonyl-CoA:ACP transacylase (MAT) domain in the interval 611-915 (YVFTGQGAQW…RGPVTQILQS (305 aa)). Positions 1008–1151 (LGLIGAPMPN…GSVAVEFGAL (144 aa)) are N-terminal hotdog fold. Positions 1008 to 1325 (LGLIGAPMPN…CVEMPSASGM (318 aa)) constitute a PKS/mFAS DH domain. The interval 1009–1323 (GLIGAPMPNF…LVCVEMPSAS (315 aa)) is dehydratase (DH) domain. The tract at residues 1169 to 1325 (TISQEVDVFY…CVEMPSASGM (157 aa)) is C-terminal hotdog fold. In terms of domain architecture, Enoyl reductase (ER) spans 1886-2197 (GMLNTLCFEI…ARSRQDKIVI (312 aa)). Residues 2222–2399 (TYLIAGGLGG…AATIDLGIVK (178 aa)) enclose the Ketoreductase (KR) domain. The region spanning 2510 to 2587 (EAARLVSAAV…AFASDLAKKG (78 aa)) is the Carrier domain. Ser-2547 carries the post-translational modification O-(pantetheine 4'-phosphoryl)serine.

Requires pantetheine 4'-phosphate as cofactor.

The protein operates within secondary metabolite biosynthesis. Partially reducing polyketide synthase; part of the gene cluster that mediates the biosynthesis of menisporopsin A, a bioactive macrocyclic polylactone. The biosynthesis of menisporopsin A is performed by a reducing (man1) and a non-reducing (men2) polyketide synthase that catalyze the formation of each menisporopsin A subunits, while the esterification and cyclolactonization activities are probably peformed by the unusual thioesterase domain of men2. First, a reduced diketide intermediate, 3-hydroxybutyryl-S-ACP is produced by men1 and transferred to men2; this is followed by a second reduced diketide which is further elongated using 3 units of malonyl-coA to form a reduced pentaketide. The cyclization of this intermediate by the PT domain forms the second subunit, 2,4-dihydroxy-6-(2-hydroxy-n-propyl)benzoyl-S-ACP. The TE domain of men2 then esterifies the secondary hydroxyl group on the side chain of the second subunit with the acyl-TE of the first subunit to form the first ester intermediate. This process occurs iteratively to form a linear tetraester intermediate. The final subunit is formed by a similar process, except that an extra malonyl-CoA is required in an additional elongation step to form a reduced hexaketide intermediate, and the carbonyl group next to the secondary hydroxyl group is reduced by a trans-acting ketoreductase. Again, the PT domain catalyzes cyclization to form the largest subunit, 2,4-dihydroxy-6-(2,4-dihydroxy-n-pentyl) benzoyl-S-ACP. Then the linear pentaester intermediate is formed. In this step, if the intermediate transfer rate is slow, intra- molecular cyclization involving the secondary hydroxyl group of the pentaester intermediate may occur to form menisporopsin B. Alternatively, transfer of the pentaester intermediate to the TE domain would allow cyclolactonization to be catalyzed by the TE to form menisporopsin A. In Menisporopsis theobromae, this protein is Partially reducing polyketide synthase men1.